A 93-amino-acid polypeptide reads, in one-letter code: UPF0367 protein ssl1972 (93 aa).

It belongs to the UPF0367 family.

The chain is UPF0367 protein ssl1972 from Synechocystis sp. (strain ATCC 27184 / PCC 6803 / Kazusa).